Here is a 161-residue protein sequence, read N- to C-terminus: Nucleotide-binding protein Aave_1854 (161 aa).

This sequence belongs to the YajQ family.

Functionally, nucleotide-binding protein. This Paracidovorax citrulli (strain AAC00-1) (Acidovorax citrulli) protein is Nucleotide-binding protein Aave_1854.